The following is a 461-amino-acid chain: Coronin-1A (461 aa).

Ser2 is subject to N-acetylserine. A Phosphoserine; by PKC modification is found at Ser2. WD repeat units lie at residues His13–Pro63, Asn73–Glu110, Pro123–Asp160, Gly164–Glu204, Lys207–Asp251, Pro258–Glu296, and Pro302–Ala349. A compositionally biased stretch (basic and acidic residues) spans Leu404–Thr418. The disordered stretch occupies residues Leu404 to Ala429. Thr412 is subject to Phosphothreonine; by PKC. The residue at position 418 (Thr418) is a Phosphothreonine. Residue Ser422 is modified to Phosphoserine. Residues Ala424–Ala460 are a coiled coil. An N6-acetyllysine modification is found at Lys449.

The protein belongs to the WD repeat coronin family. In terms of assembly, binds actin. Phosphorylation at Thr-412 by PKC strongly down-regulates the association with actin. In terms of processing, polyubiquitinated by RNF128 with 'Lys-48'-linked chains, leading to proteasomal degradation. Expressed in brain, thymus, spleen, bone marrow and lymph node. Low in lung and gut.

The protein localises to the cytoplasm. It is found in the cytoskeleton. Its subcellular location is the cell cortex. It localises to the cytoplasmic vesicle. The protein resides in the phagosome membrane. Its function is as follows. May be a crucial component of the cytoskeleton of highly motile cells, functioning both in the invagination of large pieces of plasma membrane, as well as in forming protrusions of the plasma membrane involved in cell locomotion. In mycobacteria-infected macrophages, its retention on the phagosomal membrane prevents fusion between phagosomes and lysosomes. The polypeptide is Coronin-1A (CORO1A) (Bos taurus (Bovine)).